We begin with the raw amino-acid sequence, 420 residues long: D-tagatose-1,6-bisphosphate aldolase subunit GatZ (420 aa).

Belongs to the GatZ/KbaZ family. GatZ subfamily. As to quaternary structure, forms a complex with GatY.

Its pathway is carbohydrate metabolism; D-tagatose 6-phosphate degradation; D-glyceraldehyde 3-phosphate and glycerone phosphate from D-tagatose 6-phosphate: step 2/2. In terms of biological role, component of the tagatose-1,6-bisphosphate aldolase GatYZ that is required for full activity and stability of the Y subunit. Could have a chaperone-like function for the proper and stable folding of GatY. When expressed alone, GatZ does not show any aldolase activity. Is involved in the catabolism of galactitol. This chain is D-tagatose-1,6-bisphosphate aldolase subunit GatZ, found in Escherichia coli O45:K1 (strain S88 / ExPEC).